Reading from the N-terminus, the 545-residue chain is Chaperonin GroEL (545 aa).

Residues 29 to 32 (TLGP), K50, 86 to 90 (DGTTT), G415, and D495 contribute to the ATP site.

The protein belongs to the chaperonin (HSP60) family. In terms of assembly, forms a cylinder of 14 subunits composed of two heptameric rings stacked back-to-back. Interacts with the co-chaperonin GroES.

It is found in the cytoplasm. It catalyses the reaction ATP + H2O + a folded polypeptide = ADP + phosphate + an unfolded polypeptide.. Together with its co-chaperonin GroES, plays an essential role in assisting protein folding. The GroEL-GroES system forms a nano-cage that allows encapsulation of the non-native substrate proteins and provides a physical environment optimized to promote and accelerate protein folding. The chain is Chaperonin GroEL from Bacteroides fragilis (strain ATCC 25285 / DSM 2151 / CCUG 4856 / JCM 11019 / LMG 10263 / NCTC 9343 / Onslow / VPI 2553 / EN-2).